The sequence spans 412 residues: Multifunctional CCA protein (412 aa).

ATP contacts are provided by glycine 8 and arginine 11. Glycine 8 and arginine 11 together coordinate CTP. Aspartate 21 and aspartate 23 together coordinate Mg(2+). Positions 91, 137, and 140 each coordinate ATP. CTP contacts are provided by arginine 91, arginine 137, and arginine 140. Positions 228 to 329 (TGIHTLMTLS…VKLFDSIDAW (102 aa)) constitute an HD domain.

Belongs to the tRNA nucleotidyltransferase/poly(A) polymerase family. Bacterial CCA-adding enzyme type 1 subfamily. Monomer. Can also form homodimers and oligomers. Requires Mg(2+) as cofactor. Ni(2+) is required as a cofactor.

The catalysed reaction is a tRNA precursor + 2 CTP + ATP = a tRNA with a 3' CCA end + 3 diphosphate. It carries out the reaction a tRNA with a 3' CCA end + 2 CTP + ATP = a tRNA with a 3' CCACCA end + 3 diphosphate. Functionally, catalyzes the addition and repair of the essential 3'-terminal CCA sequence in tRNAs without using a nucleic acid template. Adds these three nucleotides in the order of C, C, and A to the tRNA nucleotide-73, using CTP and ATP as substrates and producing inorganic pyrophosphate. tRNA 3'-terminal CCA addition is required both for tRNA processing and repair. Also involved in tRNA surveillance by mediating tandem CCA addition to generate a CCACCA at the 3' terminus of unstable tRNAs. While stable tRNAs receive only 3'-terminal CCA, unstable tRNAs are marked with CCACCA and rapidly degraded. This chain is Multifunctional CCA protein, found in Escherichia coli O6:K15:H31 (strain 536 / UPEC).